A 263-amino-acid polypeptide reads, in one-letter code: Homeobox protein CDX-1 (263 aa).

The interval 47–108 is disordered; sequence PGINSDPHHG…VQPPGSGLLP (62 aa). A compositionally biased stretch (polar residues) spans 82–97; sequence SSANPTQIAFSPSDYN. Positions 150 to 209 form a DNA-binding region, homeobox; it reads KDKYRVVYTDHQRLELEKEFHYSRYITIRRKAELAAALGLTERQVKIWFQNRRAKERKVN. Residues 153-174 form an interaction with DNA region; the sequence is YRVVYTDHQRLELEKEFHYSRY. The segment at 192 to 203 is interaction with 5-mCpG DNA; that stretch reads RQVKIWFQNRRA. A compositionally biased stretch (basic residues) spans 204-213; that stretch reads KERKVNKKKM. The disordered stretch occupies residues 204–263; it reads KERKVNKKKMQQQSQQASTTTPTPPSVGTTAGMGGLCSSSSSNSNLVSPSSMPIKEEYLS. Low complexity-rich tracts occupy residues 214 to 233 and 241 to 254; these read QQQS…VGTT and SSSS…SPSS.

The protein belongs to the Caudal homeobox family.

The protein resides in the nucleus. In terms of biological role, plays a role in transcriptional regulation. Involved in activated KRAS-mediated transcriptional activation of PRKD1. Binds to the PRKD1 promoter. Could play a role in the terminal differentiation of the intestine. Binds preferentially to methylated DNA. In Xenopus laevis (African clawed frog), this protein is Homeobox protein CDX-1 (cdx1).